The chain runs to 476 residues: Glutamate mutase epsilon subunit (476 aa).

R62 contributes to the L-glutamate binding site. G64 is an adenosylcob(III)alamin binding site. R96 is an L-glutamate binding site. N119 serves as a coordination point for adenosylcob(III)alamin. Residues 145-146, E167, and Y173 contribute to the L-glutamate site; that span reads RH. Adenosylcob(III)alamin is bound at residue P176. L-glutamate is bound at residue Y177. Adenosylcob(III)alamin-binding residues include F289, K318, and E322.

It belongs to the methylaspartate mutase GlmE subunit family. In terms of assembly, heterotetramer composed of 2 epsilon subunits (GlmE) and 2 sigma subunits (GlmS). GlmE exists as a homodimer and GlmS as a monomer. The cofactor is adenosylcob(III)alamin.

It carries out the reaction (2S,3S)-3-methyl-L-aspartate = L-glutamate. Its pathway is amino-acid degradation; L-glutamate degradation via mesaconate pathway; acetate and pyruvate from L-glutamate: step 1/4. Functionally, catalyzes the carbon skeleton rearrangement of L-glutamate to L-threo-3-methylaspartate ((2S,3S)-3-methylaspartate). The polypeptide is Glutamate mutase epsilon subunit (Halobacterium salinarum (strain ATCC 700922 / JCM 11081 / NRC-1) (Halobacterium halobium)).